A 549-amino-acid polypeptide reads, in one-letter code: Oxygen-dependent choline dehydrogenase (549 aa).

Residue 4-33 participates in FAD binding; that stretch reads DFVIIGSGSAGSALAYRLSEDGANSVVVLE. H465 serves as the catalytic Proton acceptor.

The protein belongs to the GMC oxidoreductase family. The cofactor is FAD.

The enzyme catalyses choline + A = betaine aldehyde + AH2. It catalyses the reaction betaine aldehyde + NAD(+) + H2O = glycine betaine + NADH + 2 H(+). The protein operates within amine and polyamine biosynthesis; betaine biosynthesis via choline pathway; betaine aldehyde from choline (cytochrome c reductase route): step 1/1. Its function is as follows. Involved in the biosynthesis of the osmoprotectant glycine betaine. Catalyzes the oxidation of choline to betaine aldehyde and betaine aldehyde to glycine betaine at the same rate. The chain is Oxygen-dependent choline dehydrogenase from Sinorhizobium medicae (strain WSM419) (Ensifer medicae).